We begin with the raw amino-acid sequence, 287 residues long: O-ureido-serine racemase (287 aa).

N20 is a binding site for substrate. C81 serves as the catalytic Proton donor. Residues 82–83, N167, N200, and 218–219 contribute to the substrate site; these read GN and EY. The Proton acceptor role is filled by C227. 228–229 lines the substrate pocket; the sequence is GS.

The protein belongs to the diaminopimelate epimerase family. Monomer.

Its subcellular location is the cytoplasm. The catalysed reaction is O-ureido-L-serine = O-ureido-D-serine. Its activity is regulated as follows. Inhibited by thiol-inactivating reagents such as iodoacetamide and Hg(2+) ions. Involved in the biosynthesis of the antibiotic D-cycloserine (DCS), a cyclic structural analog of D-alanine, used as an antitubercular agent. Catalyzes the stereoinversion of O-ureido-L-serine to O-ureido-D-serine. This chain is O-ureido-serine racemase, found in Streptomyces lavendulae.